The sequence spans 404 residues: MSHKIMAINAGSSSLKFQLLAMPQGEMICQGLIERIGMANARVTMKTSAQKWQETAPIADHRESVTLLLDKLLSHHIINTLQDIDGVGHRVAHGGEFFKDSARVTDETLAQIERLAELAPLHNPVNALGIHIFRQLLPSTPSVAVFDTAFHQTLDESAYIYPLPWRYYTELGIRRYGFHGTSHKYVSTALAERLGVPLSALRVICCHLGNGSSICAIKGGQSVNTSMGFTPQSGVMMGTRSGDIDPSILPWIAEREGKTPQQLNYLLNNESGLLGISGVSHDYRDVEQAADGGNRRAALALTLFAERIRATIGSYIMQMGGLDALIFTGGIGENSARARAAVCHNLHFLGLSIDEEKNLRNATFIQAENAVVKVAVINTNEELMIAQDVMRIALSDKVTFGVSA.

Belongs to the acetokinase family. PduW subfamily.

The protein resides in the cytoplasm. It catalyses the reaction propanoate + ATP = propanoyl phosphate + ADP. Its pathway is polyol metabolism; 1,2-propanediol degradation. Functionally, works with phosphate acetyltransferase (pta) to capture exogenous propionate and regenerate propionyl-CoA during degradation of 1,2-propanediol (1,2-PD). The protein is Propionate kinase of Citrobacter koseri (strain ATCC BAA-895 / CDC 4225-83 / SGSC4696).